A 164-amino-acid polypeptide reads, in one-letter code: 3-isopropylmalate dehydratase small subunit 2 (164 aa).

It belongs to the LeuD family. LeuD type 2 subfamily. In terms of assembly, heterodimer of LeuC and LeuD.

The catalysed reaction is (2R,3S)-3-isopropylmalate = (2S)-2-isopropylmalate. It functions in the pathway amino-acid biosynthesis; L-leucine biosynthesis; L-leucine from 3-methyl-2-oxobutanoate: step 2/4. Its function is as follows. Catalyzes the isomerization between 2-isopropylmalate and 3-isopropylmalate, via the formation of 2-isopropylmaleate. This chain is 3-isopropylmalate dehydratase small subunit 2 (leuD2), found in Pyrococcus furiosus (strain ATCC 43587 / DSM 3638 / JCM 8422 / Vc1).